The chain runs to 371 residues: N-acetyldiaminopimelate deacetylase (371 aa).

Residue aspartate 68 is part of the active site. Glutamate 127 acts as the Proton acceptor in catalysis.

This sequence belongs to the peptidase M20A family. N-acetyldiaminopimelate deacetylase subfamily.

It carries out the reaction N-acetyl-(2S,6S)-2,6-diaminopimelate + H2O = (2S,6S)-2,6-diaminopimelate + acetate. Its pathway is amino-acid biosynthesis; L-lysine biosynthesis via DAP pathway; LL-2,6-diaminopimelate from (S)-tetrahydrodipicolinate (acetylase route): step 3/3. In terms of biological role, catalyzes the conversion of N-acetyl-diaminopimelate to diaminopimelate and acetate. This is N-acetyldiaminopimelate deacetylase from Listeria welshimeri serovar 6b (strain ATCC 35897 / DSM 20650 / CCUG 15529 / CIP 8149 / NCTC 11857 / SLCC 5334 / V8).